The chain runs to 48 residues: ATP synthase protein 8 (48 aa).

The helical transmembrane segment at 13-33 threads the bilayer; the sequence is LTYGFLLLIILLVLFSQFLLP.

Belongs to the ATPase protein 8 family. As to quaternary structure, F-type ATPases have 2 components, CF(1) - the catalytic core - and CF(0) - the membrane proton channel.

The protein resides in the mitochondrion membrane. In terms of biological role, mitochondrial membrane ATP synthase (F(1)F(0) ATP synthase or Complex V) produces ATP from ADP in the presence of a proton gradient across the membrane which is generated by electron transport complexes of the respiratory chain. F-type ATPases consist of two structural domains, F(1) - containing the extramembraneous catalytic core and F(0) - containing the membrane proton channel, linked together by a central stalk and a peripheral stalk. During catalysis, ATP synthesis in the catalytic domain of F(1) is coupled via a rotary mechanism of the central stalk subunits to proton translocation. Part of the complex F(0) domain. Minor subunit located with subunit a in the membrane. The protein is ATP synthase protein 8 (ATP8) of Wickerhamomyces canadensis (Yeast).